A 446-amino-acid polypeptide reads, in one-letter code: Argininosuccinate synthase (446 aa).

Residues 17–25 (AFSGGLDTS) and Ala-43 contribute to the ATP site. Residue Tyr-99 participates in L-citrulline binding. Positions 129 and 131 each coordinate ATP. Thr-131, Asn-135, and Asp-136 together coordinate L-aspartate. Asn-135 contributes to the L-citrulline binding site. Residue Asp-136 participates in ATP binding. Arg-139 and Ser-192 together coordinate L-citrulline. Asp-194 lines the ATP pocket. 3 residues coordinate L-citrulline: Thr-201, Glu-203, and Glu-280.

It belongs to the argininosuccinate synthase family. Type 2 subfamily. Homotetramer.

It localises to the cytoplasm. It carries out the reaction L-citrulline + L-aspartate + ATP = 2-(N(omega)-L-arginino)succinate + AMP + diphosphate + H(+). The protein operates within amino-acid biosynthesis; L-arginine biosynthesis; L-arginine from L-ornithine and carbamoyl phosphate: step 2/3. The sequence is that of Argininosuccinate synthase from Methylibium petroleiphilum (strain ATCC BAA-1232 / LMG 22953 / PM1).